Consider the following 458-residue polypeptide: Elongation factor 1-alpha (458 aa).

The residue at position 2 (Gly2) is a N,N,N-trimethylglycine. At Lys3 the chain carries N6,N6-dimethyllysine; alternate. Lys3 is subject to N6-methyllysine; alternate. A tr-type G domain is found at 5–240; it reads KTHVNVVVIG…DAIEPPVRPT (236 aa). Positions 14 to 21 are G1; that stretch reads GHVDSGKS. Residue 14-21 participates in GTP binding; it reads GHVDSGKS. The residue at position 30 (Lys30) is an N6-methyllysine. A G2 region spans residues 70–74; sequence GITID. N6,N6,N6-trimethyllysine is present on Lys79. A G3 region spans residues 91 to 94; it reads DAPG. GTP contacts are provided by residues 91–95 and 153–156; these read DAPGH and NKMD. The segment at 153–156 is G4; that stretch reads NKMD. The tract at residues 192 to 194 is G5; it reads SGW. Lys316 carries the post-translational modification N6,N6-dimethyllysine; alternate. Lys316 bears the N6-methyllysine; alternate mark. N6-methyllysine is present on Lys390.

This sequence belongs to the TRAFAC class translation factor GTPase superfamily. Classic translation factor GTPase family. EF-Tu/EF-1A subfamily.

It localises to the cytoplasm. Functionally, this protein promotes the GTP-dependent binding of aminoacyl-tRNA to the A-site of ribosomes during protein biosynthesis. In Eremothecium gossypii (strain ATCC 10895 / CBS 109.51 / FGSC 9923 / NRRL Y-1056) (Yeast), this protein is Elongation factor 1-alpha (TEF).